The chain runs to 469 residues: Glutamate--tRNA ligase 1 (469 aa).

The 'HIGH' region motif lies at 9–19 (PSPTGYLHVGG). Cys-98, Cys-100, Cys-125, and Glu-127 together coordinate Zn(2+). The 'KMSKS' region signature appears at 236–240 (RLSKR). Lys-239 provides a ligand contact to ATP.

Belongs to the class-I aminoacyl-tRNA synthetase family. Glutamate--tRNA ligase type 1 subfamily. In terms of assembly, monomer. The cofactor is Zn(2+).

The protein localises to the cytoplasm. The catalysed reaction is tRNA(Glu) + L-glutamate + ATP = L-glutamyl-tRNA(Glu) + AMP + diphosphate. Its function is as follows. Catalyzes the attachment of glutamate to tRNA(Glu) in a two-step reaction: glutamate is first activated by ATP to form Glu-AMP and then transferred to the acceptor end of tRNA(Glu). In Nitrosococcus oceani (strain ATCC 19707 / BCRC 17464 / JCM 30415 / NCIMB 11848 / C-107), this protein is Glutamate--tRNA ligase 1.